A 327-amino-acid polypeptide reads, in one-letter code: Cytochrome f (327 aa).

The signal sequence occupies residues Met1 to Ala24. Heme is bound by residues Tyr25, Cys45, Cys48, and His49. The chain crosses the membrane as a helical span at residues Val293–Lys313.

Belongs to the cytochrome f family. In terms of assembly, the 4 large subunits of the cytochrome b6-f complex are cytochrome b6, subunit IV (17 kDa polypeptide, PetD), cytochrome f and the Rieske protein, while the 4 small subunits are PetG, PetL, PetM and PetN. The complex functions as a dimer. Heme serves as cofactor.

Its subcellular location is the cellular thylakoid membrane. Component of the cytochrome b6-f complex, which mediates electron transfer between photosystem II (PSII) and photosystem I (PSI), cyclic electron flow around PSI, and state transitions. The polypeptide is Cytochrome f (Synechococcus sp. (strain JA-2-3B'a(2-13)) (Cyanobacteria bacterium Yellowstone B-Prime)).